Reading from the N-terminus, the 254-residue chain is Small ribosomal subunit protein uS3 (254 aa).

One can recognise a KH type-2 domain in the interval 39–109; sequence IRNYISARLK…EVKIDVIEVI (71 aa). A disordered region spans residues 220 to 254; that stretch reads EEMKKMQERRNDSRGRGRGDGRGAKRRRRPAAKKA. Basic and acidic residues predominate over residues 221-242; sequence EMKKMQERRNDSRGRGRGDGRG. Basic residues predominate over residues 243 to 254; it reads AKRRRRPAAKKA.

It belongs to the universal ribosomal protein uS3 family. As to quaternary structure, part of the 30S ribosomal subunit. Forms a tight complex with proteins S10 and S14.

Its function is as follows. Binds the lower part of the 30S subunit head. Binds mRNA in the 70S ribosome, positioning it for translation. In Chlorobaculum parvum (strain DSM 263 / NCIMB 8327) (Chlorobium vibrioforme subsp. thiosulfatophilum), this protein is Small ribosomal subunit protein uS3.